A 183-amino-acid polypeptide reads, in one-letter code: Large ribosomal subunit protein eL18 (183 aa).

The segment at 146 to 183 (HFGPAPGVPHSHTKPYVRSKGRKFEKARGRRKSRGFRV) is disordered. Basic residues-rich tracts occupy residues 156 to 166 (SHTKPYVRSKG) and 173 to 183 (RGRRKSRGFRV).

Belongs to the eukaryotic ribosomal protein eL18 family.

The protein is Large ribosomal subunit protein eL18 (RPL18) of Cicer arietinum (Chickpea).